Consider the following 367-residue polypeptide: WD repeat-containing protein 31 (367 aa).

7 WD repeats span residues 53–90, 94–132, 137–175, 179–217, 221–264, 269–311, and 315–353; these read AFQE…AYNW, NVVK…MWDL, QPRQ…LWDV, QSVE…LWDS, QVAH…LWDL, NRIC…IWNQ, and ACLF…LLRM.

This Homo sapiens (Human) protein is WD repeat-containing protein 31 (WDR31).